The primary structure comprises 590 residues: Histone-binding protein N1/N2 (590 aa).

The disordered stretch occupies residues 1–30; sequence MAEETAALSTEKTEDTSTAPSTSAEKADGI. The stretch at 36-69 is one TPR 1 repeat; sequence AKRLMGAGQKHLVMKDVRSAVNLFQEASSLLAKQ. A disordered region spans residues 102–328; it reads ALEGMPEDDE…EKETEEEDVG (227 aa). The span at 106–120 shows a compositional bias: acidic residues; it reads MPEDDEEEAEKEEDP. Composition is skewed to basic and acidic residues over residues 128-250 and 262-275; these read LDEK…DAKE and AEEK…ESKE. The span at 293 to 327 shows a compositional bias: acidic residues; the sequence is EKMEEEEEGEDSEENEDGTEENEGTEEKETEEEDV. TPR repeat units follow at residues 357 to 390 and 399 to 432; these read AQAH…QKEH and AETH…IEKR. The interval 492 to 590 is disordered; that stretch reads GGSSGFSKEN…METATVESTA (99 aa). Residues 496-525 show a composition bias toward polar residues; the sequence is GFSKENGSTSSSSAVEKSGDSTVPVTNCVS. The Nuclear localization signal signature appears at 531–537; sequence VRKKRKT. A compositionally biased stretch (basic and acidic residues) spans 536–553; sequence KTEEESPLKDKDAKKSKQ.

This sequence belongs to the NASP family.

It is found in the nucleus. Its function is as follows. This protein is involved in nucleosome assembly. It is bound to H3 and H4 in the absence of DNA, but released from H3 and H4 in the presence of DNA. The polypeptide is Histone-binding protein N1/N2 (Xenopus laevis (African clawed frog)).